We begin with the raw amino-acid sequence, 227 residues long: Prolactin-5A1 (227 aa).

The signal sequence occupies residues 1–27 (MQIQPHPSGALLLLLLSNLLMWENVAS). Asn-47 is a glycosylation site (N-linked (GlcNAc...) asparagine). Cys-85 and Cys-204 are joined by a disulfide.

The protein belongs to the somatotropin/prolactin family. Expressed specifically in placenta. Highly expressed in invasive trophoblast cells lining the central placental vessel.

It is found in the secreted. This is Prolactin-5A1 (Prl5a1) from Rattus norvegicus (Rat).